Here is a 119-residue protein sequence, read N- to C-terminus: Protein TusC (119 aa).

The protein belongs to the DsrF/TusC family. As to quaternary structure, heterohexamer, formed by a dimer of trimers. The hexameric TusBCD complex contains 2 copies each of TusB, TusC and TusD. The TusBCD complex interacts with TusE.

It is found in the cytoplasm. Its function is as follows. Part of a sulfur-relay system required for 2-thiolation of 5-methylaminomethyl-2-thiouridine (mnm(5)s(2)U) at tRNA wobble positions. The sequence is that of Protein TusC from Cronobacter sakazakii (strain ATCC BAA-894) (Enterobacter sakazakii).